The chain runs to 436 residues: Lactonohydrolase oryL (436 aa).

The N-terminal stretch at 1–27 (MLSYTSHCLQALLGVASLPYRQYQAYS) is a signal peptide.

Belongs to the SMP-30/CGR1 family.

The protein operates within secondary metabolite biosynthesis. In terms of biological role, lactonohydrolase; part of the gene cluster that mediates the biosynthesis of oryzines, natural products with an unusual maleidride backbone. The two subunits of the fungal fatty acid synthase oryfasA and oryfasB probably form octenoic acid. This fatty acid is most likely activated by the acyl-CoA ligase oryP to give octenyl-CoA before the citrate synthase-like protein oryE catalyzes condensation with oxaloacetate to form tricarboxylic acid. The next steps of the pathways are conjectural, but a favorite possible route has been proposed, beginning with decarboxylation and concomitant dehydration by the decarboxylase oryM, followed by tautomerization, which may lead to the production of a diene intermediate. Reduction of this diene intermediate could give the known metabolite piliformic acid. On the pathway to oryzine B and oryzine A, however, hydroxylation of the diene by the alpha-ketoglutarate-dependent dioxygenase oryG and lactonisation by the lactonohydrolases oryH or oryL could give oryzine B directly. Finally, enoyl reduction by the dehydrogenase oryD would then convert oryzine B into oryzine A. The sequence is that of Lactonohydrolase oryL from Aspergillus oryzae (strain ATCC 42149 / RIB 40) (Yellow koji mold).